The following is a 77-amino-acid chain: Small integral membrane protein 7 (77 aa).

An N-terminal signal peptide occupies residues 1 to 17 (MIGDLLIFGTLLMNAGA). Over 18–55 (VLNFKLKKRETQSQGFGDDSGSSSTGENIREFLLSLRY) the chain is Extracellular. The chain crosses the membrane as a helical span at residues 56 to 76 (FRIFIALWNIFMMFCMIVLFG). A topological domain (cytoplasmic) is located at residue Ser-77.

The protein belongs to the SMIM7 family.

Its subcellular location is the membrane. The polypeptide is Small integral membrane protein 7 (smim7) (Danio rerio (Zebrafish)).